A 364-amino-acid chain; its full sequence is Aminomethyltransferase (364 aa).

This sequence belongs to the GcvT family. In terms of assembly, the glycine cleavage system is composed of four proteins: P, T, L and H.

It catalyses the reaction N(6)-[(R)-S(8)-aminomethyldihydrolipoyl]-L-lysyl-[protein] + (6S)-5,6,7,8-tetrahydrofolate = N(6)-[(R)-dihydrolipoyl]-L-lysyl-[protein] + (6R)-5,10-methylene-5,6,7,8-tetrahydrofolate + NH4(+). Functionally, the glycine cleavage system catalyzes the degradation of glycine. The chain is Aminomethyltransferase from Desulforamulus reducens (strain ATCC BAA-1160 / DSM 100696 / MI-1) (Desulfotomaculum reducens).